The sequence spans 321 residues: Lipoyl synthase (321 aa).

7 residues coordinate [4Fe-4S] cluster: Cys68, Cys73, Cys79, Cys94, Cys98, Cys101, and Ser308. Positions 80 to 297 (FNHGTATFMI…KEIALELGFT (218 aa)) constitute a Radical SAM core domain.

It belongs to the radical SAM superfamily. Lipoyl synthase family. [4Fe-4S] cluster is required as a cofactor.

It is found in the cytoplasm. The catalysed reaction is [[Fe-S] cluster scaffold protein carrying a second [4Fe-4S](2+) cluster] + N(6)-octanoyl-L-lysyl-[protein] + 2 oxidized [2Fe-2S]-[ferredoxin] + 2 S-adenosyl-L-methionine + 4 H(+) = [[Fe-S] cluster scaffold protein] + N(6)-[(R)-dihydrolipoyl]-L-lysyl-[protein] + 4 Fe(3+) + 2 hydrogen sulfide + 2 5'-deoxyadenosine + 2 L-methionine + 2 reduced [2Fe-2S]-[ferredoxin]. Its pathway is protein modification; protein lipoylation via endogenous pathway; protein N(6)-(lipoyl)lysine from octanoyl-[acyl-carrier-protein]: step 2/2. In terms of biological role, catalyzes the radical-mediated insertion of two sulfur atoms into the C-6 and C-8 positions of the octanoyl moiety bound to the lipoyl domains of lipoate-dependent enzymes, thereby converting the octanoylated domains into lipoylated derivatives. This is Lipoyl synthase from Vibrio cholerae serotype O1 (strain ATCC 39541 / Classical Ogawa 395 / O395).